The chain runs to 312 residues: Very-long-chain 3-oxoacyl-CoA reductase-like protein At1g24470 (312 aa).

The chain crosses the membrane as a helical span at residues 14–34 (LHFVCFIGFLFLLRVLFIPLL). Residue 52 to 81 (GSWAMVTGATEGIGRAFAHELAKHGLNLIL) participates in NADP(+) binding. Ser-190 provides a ligand contact to substrate. Tyr-205 acts as the Proton acceptor in catalysis.

The protein belongs to the short-chain dehydrogenases/reductases (SDR) family. In terms of tissue distribution, expressed in green siliques, flowers, inflorescence stems and leaves. Not detected in roots.

It localises to the endoplasmic reticulum membrane. Probable reductase, but unlike KCR1, has no beta-ketoacyl-coenzyme A reductase activity. The chain is Very-long-chain 3-oxoacyl-CoA reductase-like protein At1g24470 (KCR2) from Arabidopsis thaliana (Mouse-ear cress).